The chain runs to 383 residues: Pleckstrin homology domain-containing family A member 1 (383 aa).

PH domains follow at residues 7 to 112 (QNRI…KAIK) and 191 to 289 (AVIK…GAIV). Val284 is subject to Phosphoserine. The interval 362-383 (LPRSSQGTSRSRLSLQESQLPK) is disordered. Residues 370–383 (SRSRLSLQESQLPK) are compositionally biased toward low complexity.

Interacts with MPDZ and PTPN13.

The protein localises to the cytoplasm. Its subcellular location is the cell membrane. The protein resides in the nucleus. Binds specifically to phosphatidylinositol 3,4-diphosphate (PtdIns3,4P2), but not to other phosphoinositides. May recruit other proteins to the plasma membrane. This Mus musculus (Mouse) protein is Pleckstrin homology domain-containing family A member 1 (Plekha1).